The sequence spans 224 residues: Glycerol-3-phosphate acyltransferase (224 aa).

The next 6 helical transmembrane spans lie at 3–23 (IFLS…IGSL), 54–74 (VFGY…VVFA), 90–112 (LYFY…PIYF), 127–147 (LISI…LLLF), 152–172 (VSLS…IPWM), and 183–203 (GFGQ…LIFW).

It belongs to the PlsY family. Probably interacts with PlsX.

The protein localises to the cell membrane. It catalyses the reaction an acyl phosphate + sn-glycerol 3-phosphate = a 1-acyl-sn-glycero-3-phosphate + phosphate. It participates in lipid metabolism; phospholipid metabolism. Its function is as follows. Catalyzes the transfer of an acyl group from acyl-phosphate (acyl-PO(4)) to glycerol-3-phosphate (G3P) to form lysophosphatidic acid (LPA). This enzyme utilizes acyl-phosphate as fatty acyl donor, but not acyl-CoA or acyl-ACP. In Mycoplasmopsis synoviae (strain 53) (Mycoplasma synoviae), this protein is Glycerol-3-phosphate acyltransferase.